A 326-amino-acid polypeptide reads, in one-letter code: L-Ala--D-Glu endopeptidase (326 aa).

Positions 1–19 are cleaved as a signal peptide; that stretch reads MKVLLSALLLLLFAFEPSA. Zn(2+)-binding residues include His204, Asp208, His292, and His294.

The protein belongs to the peptidase M23B family. The cofactor is Zn(2+).

Functionally, L-Ala--D-Glu endopeptidase involved in production of single L-alanine side chains from tetrapeptides in the spore cortex peptidoglycan. Therefore, is required for the endospore cortex maturation. This Bacillus subtilis (strain 168) protein is L-Ala--D-Glu endopeptidase (lytH).